The primary structure comprises 507 residues: ATP synthase subunit beta (507 aa).

Positions 1 to 22 are disordered; it reads MSGLASKAKSRVKSSKGKNSTN. ATP is bound at residue 183-190; the sequence is GGAGVGKT.

This sequence belongs to the ATPase alpha/beta chains family. As to quaternary structure, F-type ATPases have 2 components, CF(1) - the catalytic core - and CF(0) - the membrane proton channel. CF(1) has five subunits: alpha(3), beta(3), gamma(1), delta(1), epsilon(1). CF(0) has three main subunits: a(1), b(2) and c(9-12). The alpha and beta chains form an alternating ring which encloses part of the gamma chain. CF(1) is attached to CF(0) by a central stalk formed by the gamma and epsilon chains, while a peripheral stalk is formed by the delta and b chains.

The protein resides in the cell inner membrane. It catalyses the reaction ATP + H2O + 4 H(+)(in) = ADP + phosphate + 5 H(+)(out). Produces ATP from ADP in the presence of a proton gradient across the membrane. The catalytic sites are hosted primarily by the beta subunits. This Ehrlichia chaffeensis (strain ATCC CRL-10679 / Arkansas) protein is ATP synthase subunit beta.